Consider the following 256-residue polypeptide: 5'-nucleotidase SurE (256 aa).

Residues Asp9, Asp10, Ser42, and Asn95 each coordinate a divalent metal cation.

The protein belongs to the SurE nucleotidase family. A divalent metal cation is required as a cofactor.

It localises to the cytoplasm. It carries out the reaction a ribonucleoside 5'-phosphate + H2O = a ribonucleoside + phosphate. Nucleotidase that shows phosphatase activity on nucleoside 5'-monophosphates. The chain is 5'-nucleotidase SurE from Campylobacter curvus (strain 525.92).